The primary structure comprises 470 residues: Low molecular weight neuronal intermediate filament (470 aa).

The head stretch occupies residues Met1 to Gln91. The region spanning Glu88–Leu399 is the IF rod domain. The coil 1A stretch occupies residues Gln91–Leu123. The segment at Thr121–Ile136 is linker 1. The tract at residues Tyr137–Leu232 is coil 1B. Positions Gln233–Pro251 are linker 12. The tract at residues Asp252–Arg270 is coil 2A. Residues Asn271 to Tyr279 form a linker 2 region. Residues Gln280 to Glu395 form a coil 2B region. The tail stretch occupies residues Glu396 to Asn470. The segment covering Phe414–Ser431 has biased composition (low complexity). Positions Phe414–Asn470 are disordered. Basic and acidic residues predominate over residues Ile432–Glu442.

Belongs to the intermediate filament family. In terms of tissue distribution, nervous system; in axons in the PNS and in small perikarya in the dorsal root ganglion.

This chain is Low molecular weight neuronal intermediate filament, found in Xenopus laevis (African clawed frog).